We begin with the raw amino-acid sequence, 452 residues long: 1,4-beta-D-glucan cellobiohydrolase A (452 aa).

An N-terminal signal peptide occupies residues methionine 1–alanine 17. A glycan (N-linked (GlcNAc...) asparagine) is linked at asparagine 62. The active-site Nucleophile is the glutamate 227. Glutamate 232 acts as the Proton donor in catalysis. Residues asparagine 285, asparagine 335, asparagine 402, and asparagine 445 are each glycosylated (N-linked (GlcNAc...) asparagine).

This sequence belongs to the glycosyl hydrolase 7 (cellulase C) family.

It localises to the secreted. It carries out the reaction Hydrolysis of (1-&gt;4)-beta-D-glucosidic linkages in cellulose and cellotetraose, releasing cellobiose from the non-reducing ends of the chains.. Functionally, the biological conversion of cellulose to glucose generally requires three types of hydrolytic enzymes: (1) Endoglucanases which cut internal beta-1,4-glucosidic bonds; (2) Exocellobiohydrolases that cut the disaccharide cellobiose from the non-reducing end of the cellulose polymer chain; (3) Beta-1,4-glucosidases which hydrolyze the cellobiose and other short cello-oligosaccharides to glucose. The polypeptide is 1,4-beta-D-glucan cellobiohydrolase A (cbhA) (Aspergillus niger).